Reading from the N-terminus, the 346-residue chain is MSDNIRVGLIGYGYASKTFHAPLIAGTPGQELAVISSSDETKVKADWPTVTVVSEPKHLFNDPNIDLIVIPTPNDTHFPLAKAALEAGKHVVVDKPFTVTLSQARELDALAKSLGRVLSVFHNRRWDSDFLTLKGLLAEGVLGEVAYFESHFDRFRPQVRDRWREQGGPGSGIWYDLAPHLLDQAITLFGLPVSMTVDLAQLRPGAQSTDYFHAILSYPQRRVILHGTMLAAAESARYIVHGSRGSYVKYGLDPQEERLKNGERLPQEDWGYDMRDGVLTRVEGEERVEETLLTVPGNYPAYYAAIRDALNGDGENPVPASQAIQVMELIELGIESAKHRATLCLA.

It belongs to the Gfo/Idh/MocA family.

This is an uncharacterized protein from Escherichia coli (strain K12).